The sequence spans 313 residues: Solute carrier family 25 member 36 (313 aa).

Solcar repeat units lie at residues 4-110 (RDTL…CKEK), 118-205 (DSTQ…IKRK), and 226-310 (SDFV…VVYL). The next 6 membrane-spanning stretches (helical) occupy residues 7–27 (LVHLFAGGCGGTVGAILTCPL), 41–57 (LYISEVHLNTVNGASVN), 113–133 (NIFNPDSTQVHMISAGVAGFT), 182–202 (MSASYAGISETVIHFVIYESI), 228–248 (FVGMMMAAATSKTCATSIAYP), and 293–313 (QIPNTAIMMSTYEVVVYLLDG).

The protein belongs to the mitochondrial carrier (TC 2.A.29) family.

It is found in the mitochondrion inner membrane. Functionally, mitochondrial transporter that imports/exports pyrimidine nucleotides into and from mitochondria. Transports preferentially cytosine and uracil (deoxy)nucleoside mono-, di-, and triphosphates by uniport and antiport mechanism. In Gallus gallus (Chicken), this protein is Solute carrier family 25 member 36 (SLC25A36).